The following is a 77-amino-acid chain: UPF0154 protein LCK_00994 (77 aa).

The helical transmembrane segment at 5-25 (FGILIFVLGLVIGLVIGFFVA) threads the bilayer. Positions 50–77 (SMGQKPSQKKLNQMMAQMKQQSEQSQKK) are disordered.

It belongs to the UPF0154 family.

Its subcellular location is the cell membrane. This Leuconostoc citreum (strain KM20) protein is UPF0154 protein LCK_00994.